A 509-amino-acid polypeptide reads, in one-letter code: Cobyric acid synthase (509 aa).

Residues 262 to 459 (ELKVGIIKLP…IHGIFENDDW (198 aa)) form the GATase cobBQ-type domain. The active-site Nucleophile is the Cys-343. Residue His-451 is part of the active site.

This sequence belongs to the CobB/CobQ family. CobQ subfamily.

It participates in cofactor biosynthesis; adenosylcobalamin biosynthesis. In terms of biological role, catalyzes amidations at positions B, D, E, and G on adenosylcobyrinic A,C-diamide. NH(2) groups are provided by glutamine, and one molecule of ATP is hydrogenolyzed for each amidation. The polypeptide is Cobyric acid synthase (Prochlorococcus marinus subsp. pastoris (strain CCMP1986 / NIES-2087 / MED4)).